Reading from the N-terminus, the 124-residue chain is MGAEARLSRQRAYRKGHRGEWLAAFALRLKGYRILAHRFKTPLGEIDLIARRGDLVAIVEVKARPTLGEAMEAVSFTAQRRIDAAADLWLSRQPDYARLSLRYDLVAVLPRRWPVHVENIYAAR.

It belongs to the UPF0102 family.

This chain is UPF0102 protein Meso_4010, found in Chelativorans sp. (strain BNC1).